A 400-amino-acid chain; its full sequence is WD repeat and FYVE domain-containing protein 2 (400 aa).

WD repeat units lie at residues 22-61 (GSQE…QYWP), 66-105 (AMPS…NKMT), 112-150 (AHQS…QRLG), 153-192 (RTSA…CTLV), 197-236 (GHTG…GTAI), and 240-279 (GHND…QETP). The FYVE-type zinc finger occupies 281 to 352 (WLDSDSCQKC…VCDSCHEAIT (72 aa)). Residues cysteine 287, cysteine 290, cysteine 314, cysteine 317, cysteine 322, cysteine 325, cysteine 344, and cysteine 347 each contribute to the Zn(2+) site. The stretch at 364–399 (DSKHNIVHVHFDATRGWLLTSGTDKVIKLWDMTPVV) is one WD 7 repeat.

In terms of assembly, homodimer. Interacts (via WD repeats 1-3) with AKT1, AKT2, PRKCZ and PRKCI. Interacts with VAMP2. Forms a complex with VAMP2 and PRKCZ. Interacts with FOXO1. Forms a complex with AKT1 and FOXO1.

The protein resides in the endosome. It localises to the early endosome. It is found in the cytoplasm. In terms of biological role, acts in an adapter protein-like fashion to mediate the interaction between the kinase PRKCZ and its substrate VAMP2 and increases the PRKCZ-dependent phosphorylation of VAMP2. Positively regulates adipocyte differentiation, by facilitating the phosphorylation and thus inactivation of the anti-adipogenetic transcription factor FOXO1 by the kinase AKT1. Plays a role in endosomal control of AKT2 signaling; required for insulin-stimulated AKT2 phosphorylation and glucose uptake and insulin-stimulated phosphorylation of AKT2 substrates. Participates in transferrin receptor endocytosis. The protein is WD repeat and FYVE domain-containing protein 2 (WDFY2) of Homo sapiens (Human).